A 115-amino-acid polypeptide reads, in one-letter code: Probable mycobacterial cidal antitoxin Rv3188 (115 aa).

Belongs to the MbcA/ParS/Xre antitoxin family. Forms a heterotetramer with cognate toxin Rv3189.

In terms of biological role, probable antitoxin component of a type II toxin-antitoxin (TA) system. Neutralizes the activity of cognate toxin Rv3189 by blocking access to the toxin active site. In Mycobacterium tuberculosis (strain ATCC 25618 / H37Rv), this protein is Probable mycobacterial cidal antitoxin Rv3188.